A 464-amino-acid polypeptide reads, in one-letter code: Fumarate hydratase class II (464 aa).

Residues 97 to 99, 128 to 131, 138 to 140, and threonine 186 contribute to the substrate site; these read SGT, HPND, and SSN. Histidine 187 (proton donor/acceptor) is an active-site residue. The active site involves serine 317. Substrate-binding positions include serine 318 and 323-325; that span reads KVN.

It belongs to the class-II fumarase/aspartase family. Fumarase subfamily. As to quaternary structure, homotetramer.

Its subcellular location is the cytoplasm. It carries out the reaction (S)-malate = fumarate + H2O. It functions in the pathway carbohydrate metabolism; tricarboxylic acid cycle; (S)-malate from fumarate: step 1/1. Its function is as follows. Involved in the TCA cycle. Catalyzes the stereospecific interconversion of fumarate to L-malate. This Leptospira interrogans serogroup Icterohaemorrhagiae serovar copenhageni (strain Fiocruz L1-130) protein is Fumarate hydratase class II.